Reading from the N-terminus, the 654-residue chain is Polyvinylalcohol dehydrogenase (654 aa).

The first 32 residues, 1-32 (MGSHAWGGAVFSAATLIAFGSVVHASGTVAET), serve as a signal peptide directing secretion. The region spanning 42–159 (ADQLDGETLY…AANQWNGWST (118 aa)) is the Cytochrome c domain. Residues cysteine 55, cysteine 58, and histidine 59 each contribute to the heme c site.

Belongs to the bacterial PQQ dehydrogenase family. As to quaternary structure, monomer. It depends on pyrroloquinoline quinone as a cofactor.

It localises to the periplasm. It carries out the reaction a polyvinyl alcohol + 2n Fe(III)-[cytochrome c] = an oxidized polyvinyl alcohol + 2n Fe(II)-[cytochrome c] + 2n H(+). Catalyzes the oxidation of polyvinyl alcohol (PVA) in the polyvinyl alcohol degradation pathway. The chain is Polyvinylalcohol dehydrogenase (pvadh) from Sphingopyxis sp. (strain 113P3).